The sequence spans 373 residues: uncharacterized protein (373 aa).

Residues aspartate 15 to glutamate 101 form the WSC domain. Disordered stretches follow at residues glutamate 101–serine 171, phenylalanine 183–serine 210, and asparagine 291–alanine 316. Low complexity-rich tracts occupy residues serine 110–serine 171 and phenylalanine 183–serine 204.

This is an uncharacterized protein from Pichia angusta (Yeast).